The primary structure comprises 150 residues: Large ribosomal subunit protein bL9 (150 aa).

The protein belongs to the bacterial ribosomal protein bL9 family.

Functionally, binds to the 23S rRNA. In Burkholderia ambifaria (strain MC40-6), this protein is Large ribosomal subunit protein bL9.